A 500-amino-acid polypeptide reads, in one-letter code: L-arabinose isomerase (500 aa).

4 residues coordinate Mn(2+): Glu306, Glu333, His349, and His448.

The protein belongs to the arabinose isomerase family. Mn(2+) serves as cofactor.

The enzyme catalyses beta-L-arabinopyranose = L-ribulose. Its pathway is carbohydrate degradation; L-arabinose degradation via L-ribulose; D-xylulose 5-phosphate from L-arabinose (bacterial route): step 1/3. Its function is as follows. Catalyzes the conversion of L-arabinose to L-ribulose. In Saccharophagus degradans (strain 2-40 / ATCC 43961 / DSM 17024), this protein is L-arabinose isomerase.